A 307-amino-acid polypeptide reads, in one-letter code: Aspartate carbamoyltransferase catalytic subunit (307 aa).

Carbamoyl phosphate contacts are provided by R59 and T60. Position 87 (K87) interacts with L-aspartate. Positions 109, 137, and 140 each coordinate carbamoyl phosphate. L-aspartate-binding residues include R173 and R223. Residues G266 and P267 each contribute to the carbamoyl phosphate site.

The protein belongs to the aspartate/ornithine carbamoyltransferase superfamily. ATCase family. In terms of assembly, heterododecamer (2C3:3R2) of six catalytic PyrB chains organized as two trimers (C3), and six regulatory PyrI chains organized as three dimers (R2).

It catalyses the reaction carbamoyl phosphate + L-aspartate = N-carbamoyl-L-aspartate + phosphate + H(+). The protein operates within pyrimidine metabolism; UMP biosynthesis via de novo pathway; (S)-dihydroorotate from bicarbonate: step 2/3. Catalyzes the condensation of carbamoyl phosphate and aspartate to form carbamoyl aspartate and inorganic phosphate, the committed step in the de novo pyrimidine nucleotide biosynthesis pathway. In Helicobacter pylori (strain Shi470), this protein is Aspartate carbamoyltransferase catalytic subunit.